The sequence spans 115 residues: Pycsar effector protein TpPycTM (115 aa).

A run of 2 helical transmembrane segments spans residues Ile44–Asn64 and Val74–Val94.

It is found in the cell inner membrane. Pycsar (pyrimidine cyclase system for antiphage resistance) provides immunity against bacteriophage. The pyrimidine cyclase (PycC) synthesizes cyclic nucleotides in response to infection; these serve as specific second messenger signals. The signals activate the adjacent effector, leading to bacterial cell death and abortive phage infection. A clade C Pycsar system. Its function is as follows. The effector gene of a two-gene Pycsar system. Expression of this and adjacent uridylate cyclase TpPycC (AC A0A1T4LJ54) probably confers resistance to bacteriophage. The genes are probably only expressed in response to bacteriophage infection. Probably only responds to cUMP (produced by its cognate NTP cyclase), acts by impairing membrane integrity. This Treponema porcinum protein is Pycsar effector protein TpPycTM.